The sequence spans 335 residues: Cytochrome c biogenesis protein CcsA (335 aa).

Transmembrane regions (helical) follow at residues 15–35 (FLLLFLTMLIYWAGAAFPNVT), 36–56 (WLPTLGTTGVAIANLCMATLL), 68–88 (LSNLYESLFFLAWGVTAIHLV), 97–117 (LVGVVTTPVAMGITAFAALSL), 142–162 (VMMLSYATLMVGSVLAIAFLV), 243–263 (IIGLGFPLLTIGIIAGAVWAN), 278–298 (WALITWLVFAAYLHARITKGW), and 304–324 (AILAASGFVVVWVCYLGVNLL).

The protein belongs to the CcmF/CycK/Ccl1/NrfE/CcsA family. In terms of assembly, may interact with ccs1.

It is found in the cellular thylakoid membrane. In terms of biological role, required during biogenesis of c-type cytochromes (cytochrome c6 and cytochrome f) at the step of heme attachment. The polypeptide is Cytochrome c biogenesis protein CcsA (Crocosphaera subtropica (strain ATCC 51142 / BH68) (Cyanothece sp. (strain ATCC 51142))).